The following is a 486-amino-acid chain: L-carnitine:corrinoid methyltransferase (486 aa).

The protein belongs to the trimethylamine methyltransferase family. In terms of assembly, the L-carnitine:THF methyl transfer system is composed of two methyltransferases, MtcB and MtqA, and the corrinoid protein MtqC.

It catalyses the reaction Co(I)-[quaternary-amine-specific corrinoid protein] + (R)-carnitine + H(+) = (3R)-4-(dimethylamino)-3-hydroxybutanoate + methyl-Co(III)-[quaternary-amine-specific corrinoid protein]. Its function is as follows. Involved in the degradation of the quaternary amine L-carnitine. Component of a corrinoid-dependent methyltransferase system that transfers a methyl group from L-carnitine to tetrahydrofolate (THF), forming methyl-THF, a key intermediate in the Wood-Ljungdahl acetogenesis pathway. MtcB catalyzes the methylation of the corrinoid protein MtqC, using L-carnitine as the methyl donor. L-carnitine demethylation generates the unusual biological product norcarnitine, which is likely degraded by other members of the gut microbiota. In vitro, can methylate free cob(I)alamin. The sequence is that of L-carnitine:corrinoid methyltransferase from Eubacterium limosum.